The following is a 198-amino-acid chain: Putative NADH dehydrogenase/NAD(P)H nitroreductase XOO4267 (198 aa).

It belongs to the nitroreductase family. HadB/RutE subfamily. The cofactor is FMN.

The chain is Putative NADH dehydrogenase/NAD(P)H nitroreductase XOO4267 from Xanthomonas oryzae pv. oryzae (strain KACC10331 / KXO85).